Here is a 96-residue protein sequence, read N- to C-terminus: uncharacterized protein (96 aa).

Residues 1-19 (MKQIIPALITLSFSPMAIA) form the signal peptide.

This is an uncharacterized protein from Synechocystis sp. (strain ATCC 27184 / PCC 6803 / Kazusa).